The sequence spans 154 residues: 6,7-dimethyl-8-ribityllumazine synthase (154 aa).

5-amino-6-(D-ribitylamino)uracil contacts are provided by residues Phe-22, 56-58, and 80-82; these read AFE and AVI. 85–86 contributes to the (2S)-2-hydroxy-3-oxobutyl phosphate binding site; the sequence is AT. His-88 (proton donor) is an active-site residue. 5-amino-6-(D-ribitylamino)uracil is bound at residue Phe-113. Arg-127 is a (2S)-2-hydroxy-3-oxobutyl phosphate binding site.

It belongs to the DMRL synthase family. In terms of assembly, forms an icosahedral capsid composed of 60 subunits, arranged as a dodecamer of pentamers.

It carries out the reaction (2S)-2-hydroxy-3-oxobutyl phosphate + 5-amino-6-(D-ribitylamino)uracil = 6,7-dimethyl-8-(1-D-ribityl)lumazine + phosphate + 2 H2O + H(+). It functions in the pathway cofactor biosynthesis; riboflavin biosynthesis; riboflavin from 2-hydroxy-3-oxobutyl phosphate and 5-amino-6-(D-ribitylamino)uracil: step 1/2. Its function is as follows. Catalyzes the formation of 6,7-dimethyl-8-ribityllumazine by condensation of 5-amino-6-(D-ribitylamino)uracil with 3,4-dihydroxy-2-butanone 4-phosphate. This is the penultimate step in the biosynthesis of riboflavin. This chain is 6,7-dimethyl-8-ribityllumazine synthase, found in Geobacillus kaustophilus (strain HTA426).